A 263-amino-acid polypeptide reads, in one-letter code: Putative alpha/beta hydrolase L404 (263 aa).

Residue Gly2 is the site of N-myristoyl glycine; by host attachment.

The protein belongs to the AB hydrolase superfamily.

This chain is Putative alpha/beta hydrolase L404, found in Acanthamoeba polyphaga (Amoeba).